The following is a 392-amino-acid chain: Alanine--glyoxylate aminotransferase (392 aa).

Lys-209 is subject to N6-(pyridoxal phosphate)lysine. Residue Lys-225 is modified to N6-acetyllysine; alternate. At Lys-225 the chain carries N6-succinyllysine; alternate. An N6-acetyllysine mark is found at Lys-234 and Lys-312. Arg-360 lines the substrate pocket. Residues 390–392 (KKL) carry the Microbody targeting signal motif.

This sequence belongs to the class-V pyridoxal-phosphate-dependent aminotransferase family. Homodimer. Pyridoxal 5'-phosphate serves as cofactor.

It is found in the peroxisome. The enzyme catalyses L-serine + pyruvate = 3-hydroxypyruvate + L-alanine. It catalyses the reaction glyoxylate + L-alanine = glycine + pyruvate. In terms of biological role, peroxisomal aminotransferase that catalyzes the transamination of glyoxylate to glycine and contributes to the glyoxylate detoxification. Also catalyzes the transamination between L-serine and pyruvate and contributes to gluconeogenesis from the L-serine metabolism. This is Alanine--glyoxylate aminotransferase from Pongo abelii (Sumatran orangutan).